A 255-amino-acid polypeptide reads, in one-letter code: Taurine import ATP-binding protein TauB (255 aa).

The 228-residue stretch at 2–229 folds into the ABC transporter domain; it reads LQISHLYADY…RFVAGESSRS (228 aa). An ATP-binding site is contributed by 34–41; sequence GPSGCGKT.

This sequence belongs to the ABC transporter superfamily. Taurine importer (TC 3.A.1.17.1) family. In terms of assembly, the complex is composed of two ATP-binding proteins (TauB), two transmembrane proteins (TauC) and a solute-binding protein (TauA).

It localises to the cell inner membrane. It catalyses the reaction taurine(out) + ATP + H2O = taurine(in) + ADP + phosphate + H(+). Its function is as follows. Part of the ABC transporter complex TauABC involved in taurine import. Responsible for energy coupling to the transport system. This Escherichia coli (strain K12) protein is Taurine import ATP-binding protein TauB.